The chain runs to 182 residues: Adenine phosphoribosyltransferase (182 aa).

It belongs to the purine/pyrimidine phosphoribosyltransferase family. Homodimer.

The protein localises to the cytoplasm. The catalysed reaction is AMP + diphosphate = 5-phospho-alpha-D-ribose 1-diphosphate + adenine. Its pathway is purine metabolism; AMP biosynthesis via salvage pathway; AMP from adenine: step 1/1. Its function is as follows. Catalyzes a salvage reaction resulting in the formation of AMP, that is energically less costly than de novo synthesis. This Pseudomonas syringae pv. syringae (strain B728a) protein is Adenine phosphoribosyltransferase.